A 286-amino-acid polypeptide reads, in one-letter code: Phosphoribosylaminoimidazole-succinocarboxamide synthase (286 aa).

Belongs to the SAICAR synthetase family.

It carries out the reaction 5-amino-1-(5-phospho-D-ribosyl)imidazole-4-carboxylate + L-aspartate + ATP = (2S)-2-[5-amino-1-(5-phospho-beta-D-ribosyl)imidazole-4-carboxamido]succinate + ADP + phosphate + 2 H(+). Its pathway is purine metabolism; IMP biosynthesis via de novo pathway; 5-amino-1-(5-phospho-D-ribosyl)imidazole-4-carboxamide from 5-amino-1-(5-phospho-D-ribosyl)imidazole-4-carboxylate: step 1/2. This chain is Phosphoribosylaminoimidazole-succinocarboxamide synthase, found in Histophilus somni (strain 2336) (Haemophilus somnus).